We begin with the raw amino-acid sequence, 2631 residues long: Cyclic GMP-binding protein C (2631 aa).

LRR repeat units lie at residues 170–194 (TAQI…IFSL), 196–217 (WIQK…IGKL), 218–240 (QQLQ…IGDL), 242–262 (NLKR…LERL), 263–285 (SKLE…IASL), and 287–308 (SLKT…VVSK). A Roc domain is found at 323-515 (GARPCLRSKL…QLIEDIIKTQ (193 aa)). GTP is bound by residues 336 to 343 (GDPGVGKT), 402 to 406 (DIANQ), and 458 to 461 (THID). The 219-residue stretch at 523–741 (PSSFFTLEEA…ESCQKRAVIL (219 aa)) folds into the COR domain. A Protein kinase domain is found at 878–1172 (VKINKEVGRG…KKKFAPLPFT (295 aa)). ATP-binding positions include 884–892 (VGRGAFGIV) and K905. The active-site Proton acceptor is D1023. The span at 1225 to 1250 (ISLTSSGTSPTNSPVGGLLSQSLTQP) shows a compositional bias: polar residues. 2 disordered regions span residues 1225–1263 (ISLT…ILST) and 1387–1418 (SSAT…RNSV). Low complexity predominate over residues 1251–1263 (ITSGGSTSGILST). Residues 1366–1539 (SVSIIIAATM…QIYGTLTTHE (174 aa)) enclose the N-terminal Ras-GEF domain. The segment covering 1392 to 1404 (KSEHISTRRRSDT) has biased composition (basic and acidic residues). Positions 1620–1706 (PLLGITVKEK…SPTSFYMFLE (87 aa)) constitute a DEP domain. One can recognise a Ras-GEF domain in the interval 1708 to 1971 (DPELIARQYT…DLKALDSLQI (264 aa)). Residues 1989–2013 (GTTNDDKEKGDENGGGLTSSNFFGN) form a disordered region. A nucleoside 3',5'-cyclic phosphate is bound at residue 2014-2133 (GSDELTERDW…AKFYKIMANQ (120 aa)). Disordered regions lie at residues 2142-2180 (PWSK…GGGL), 2192-2239 (MSLS…TTTD), and 2263-2346 (SANL…GQQP). The segment covering 2144-2174 (SKPKNTTGGSSSSNQSAGPDNILGTTPTGIS) has biased composition (low complexity). Positions 2212–2221 (LPSPPAPLQS) are enriched in pro residues. Low complexity predominate over residues 2222–2238 (PPTSGISSPTTTTSTTT). Positions 2287–2299 (TINKDPHQRDSGS) are enriched in basic and acidic residues. The span at 2321 to 2336 (GSISYLGRTQTSTSPL) shows a compositional bias: polar residues. The region spanning 2354–2414 (EFCQRFALVD…KNIDKLICIN (61 aa)) is the GRAM domain. 2490-2616 (GDELTKEDWE…ASKWFKYLAT (127 aa)) contributes to the a nucleoside 3',5'-cyclic phosphate binding site.

It belongs to the protein kinase superfamily. TKL Ser/Thr protein kinase family. ROCO subfamily.

The catalysed reaction is L-seryl-[protein] + ATP = O-phospho-L-seryl-[protein] + ADP + H(+). It carries out the reaction L-threonyl-[protein] + ATP = O-phospho-L-threonyl-[protein] + ADP + H(+). In terms of biological role, promotes the exchange of Ras-bound GDP by GTP. Required for cyclic GMP-mediated chemotaxis, polarity. Plays a key role in cyclic AMP-induced myosin II translocation to the cortex. Also involved in the phosphorylation of mlkA and mlcR, either directly or via an intermediate kinase. This is Cyclic GMP-binding protein C (gbpC) from Dictyostelium discoideum (Social amoeba).